A 318-amino-acid polypeptide reads, in one-letter code: NADH-ubiquinone oxidoreductase chain 1 (318 aa).

A run of 8 helical transmembrane segments spans residues 2 to 22 (FTIN…FLTL), 70 to 90 (MFII…VPLP), 100 to 120 (LGVL…LWSG), 146 to 166 (LAII…STLI), 171 to 191 (HLWL…STLA), 222 to 242 (LFFM…TILF), 253 to 273 (ELYT…FLWI), and 294 to 314 (LPLT…MSSI).

The protein belongs to the complex I subunit 1 family.

It localises to the mitochondrion inner membrane. It catalyses the reaction a ubiquinone + NADH + 5 H(+)(in) = a ubiquinol + NAD(+) + 4 H(+)(out). Functionally, core subunit of the mitochondrial membrane respiratory chain NADH dehydrogenase (Complex I) that is believed to belong to the minimal assembly required for catalysis. Complex I functions in the transfer of electrons from NADH to the respiratory chain. The immediate electron acceptor for the enzyme is believed to be ubiquinone. The polypeptide is NADH-ubiquinone oxidoreductase chain 1 (MT-ND1) (Rhinoceros unicornis (Greater Indian rhinoceros)).